A 100-amino-acid polypeptide reads, in one-letter code: Small ribosomal subunit protein bS21 (100 aa).

Positions 37 to 52 are enriched in basic and acidic residues; it reads EKPSEKKAREKAEAVR. The segment at 37-100 is disordered; the sequence is EKPSEKKARE…GAGAGPRGPR (64 aa). Residues 53–62 show a composition bias toward basic residues; it reads RARKLARKKL. Residues 84-100 show a composition bias toward gly residues; it reads GAAGAGAGAGAGPRGPR.

Belongs to the bacterial ribosomal protein bS21 family.

The protein is Small ribosomal subunit protein bS21 of Rhodopseudomonas palustris (strain BisB5).